The sequence spans 28 residues: Heat shock protein 81 (28 aa).

ATP contacts are provided by asparagine 5 and aspartate 21.

This sequence belongs to the heat shock protein 90 family. As to quaternary structure, homodimer.

The protein localises to the cytoplasm. Its function is as follows. Putative molecular chaperone that may promote the maturation, structural maintenance and proper regulation of specific target proteins. This is Heat shock protein 81 from Pseudotsuga menziesii (Douglas-fir).